The primary structure comprises 277 residues: Phosphatidylglycerol--prolipoprotein diacylglyceryl transferase (277 aa).

4 consecutive transmembrane segments (helical) span residues 18–38 (ISVKWYGVIIASAVVIALLLA), 51–71 (IIVDLLIWAIPISIISARIYY), 89–109 (IWHGGIAIYGALIGAVLTAII), and 116–136 (ISFWQLADVVAPSLIIAQAIG). An a 1,2-diacyl-sn-glycero-3-phospho-(1'-sn-glycerol)-binding site is contributed by arginine 137. A run of 3 helical transmembrane segments spans residues 177–197 (QPTFLYESLWNVLGFIILLII), 205–225 (GELFLGYVIWYSFGRFFIEGM), and 235–255 (FRVSQVLSLLLIVLSIGIIIY).

It belongs to the Lgt family.

The protein localises to the cell membrane. It catalyses the reaction L-cysteinyl-[prolipoprotein] + a 1,2-diacyl-sn-glycero-3-phospho-(1'-sn-glycerol) = an S-1,2-diacyl-sn-glyceryl-L-cysteinyl-[prolipoprotein] + sn-glycerol 1-phosphate + H(+). It functions in the pathway protein modification; lipoprotein biosynthesis (diacylglyceryl transfer). Its function is as follows. Catalyzes the transfer of the diacylglyceryl group from phosphatidylglycerol to the sulfhydryl group of the N-terminal cysteine of a prolipoprotein, the first step in the formation of mature lipoproteins. The sequence is that of Phosphatidylglycerol--prolipoprotein diacylglyceryl transferase from Listeria monocytogenes serotype 4a (strain HCC23).